The following is an 81-amino-acid chain: MSIFNSIVSLGSVSSSNKVSVANGSSSSSFGSNGISGAKTSAKVNATANVNAIADVNALLATATNAANTNVNVASATSLKL.

A disordered region spans residues 11 to 34 (GSVSSSNKVSVANGSSSSSFGSNG).

This is an uncharacterized protein from Dictyostelium discoideum (Social amoeba).